Consider the following 156-residue polypeptide: Ribosomal RNA large subunit methyltransferase H (156 aa).

Residues Leu73, Gly104, and 123 to 128 (VSSLTL) each bind S-adenosyl-L-methionine.

Belongs to the RNA methyltransferase RlmH family. In terms of assembly, homodimer.

The protein localises to the cytoplasm. It catalyses the reaction pseudouridine(1915) in 23S rRNA + S-adenosyl-L-methionine = N(3)-methylpseudouridine(1915) in 23S rRNA + S-adenosyl-L-homocysteine + H(+). Specifically methylates the pseudouridine at position 1915 (m3Psi1915) in 23S rRNA. The sequence is that of Ribosomal RNA large subunit methyltransferase H from Burkholderia thailandensis (strain ATCC 700388 / DSM 13276 / CCUG 48851 / CIP 106301 / E264).